The primary structure comprises 395 residues: Nicotinate phosphoribosyltransferase (395 aa).

A Phosphohistidine; by autocatalysis modification is found at His-222.

It belongs to the NAPRTase family. Post-translationally, transiently phosphorylated on a His residue during the reaction cycle. Phosphorylation strongly increases the affinity for substrates and increases the rate of nicotinate D-ribonucleotide production. Dephosphorylation regenerates the low-affinity form of the enzyme, leading to product release.

The enzyme catalyses nicotinate + 5-phospho-alpha-D-ribose 1-diphosphate + ATP + H2O = nicotinate beta-D-ribonucleotide + ADP + phosphate + diphosphate. It functions in the pathway cofactor biosynthesis; NAD(+) biosynthesis; nicotinate D-ribonucleotide from nicotinate: step 1/1. Catalyzes the synthesis of beta-nicotinate D-ribonucleotide from nicotinate and 5-phospho-D-ribose 1-phosphate at the expense of ATP. This is Nicotinate phosphoribosyltransferase from Polaromonas sp. (strain JS666 / ATCC BAA-500).